Reading from the N-terminus, the 131-residue chain is Small ribosomal subunit protein eS17 (131 aa).

This sequence belongs to the eukaryotic ribosomal protein eS17 family.

This Theileria annulata protein is Small ribosomal subunit protein eS17 (RPS17).